We begin with the raw amino-acid sequence, 416 residues long: Lactose permease (416 aa).

The Cytoplasmic portion of the chain corresponds to 1–13 (MYYLKNTNFWMFG). The chain crosses the membrane as a helical span at residues 14–34 (FFFFFYFFIMGAYFPFFPIWL). Topologically, residues 35–45 (HEVNHISKGDT) are periplasmic. Residues 46 to 66 (GIIFACISLFSLLFQPIFGLL) traverse the membrane as a helical segment. Residues 67 to 75 (SDKLGLRKH) are Cytoplasmic-facing. Residues 76–96 (LLWVITGMLVMFAPFFIYVFG) traverse the membrane as a helical segment. Proline 97 is a topological domain (periplasmic). The chain crosses the membrane as a helical span at residues 98–118 (LLQVNILLGSIVGGIYLGFIY). Residues 119-144 (NAGAPAIEAYIEKASRRSNFEFGRAR) lie on the Cytoplasmic side of the membrane. A helical transmembrane segment spans residues 145–165 (MFGCVGWALCASIAGIMFTIN). Residue asparagine 166 is a topological domain, periplasmic. Residues 167-187 (QFVFWLGSGCAVILALLLLFS) traverse the membrane as a helical segment. Residues 188 to 211 (KTDVPSSAKVADAVGANNSAFSLK) lie on the Cytoplasmic side of the membrane. A helical membrane pass occupies residues 212–232 (LALELFKQPKLWLISLYVVGV). Over 233 to 262 (SCTYDVFDQQFANFFTSFFATGEQGTRVFG) the chain is Periplasmic. A helical membrane pass occupies residues 263 to 283 (YVTTMGELLNASIMFFAPLIV). Residues 284–290 (NRIGGKN) lie on the Cytoplasmic side of the membrane. A helical membrane pass occupies residues 291–309 (ALLLAGTIMSVRIIGSHSH). Topologically, residues 310–314 (TALEV) are periplasmic. A helical membrane pass occupies residues 315 to 336 (VILKTLHMFEIPFLIVGCFKYI). The Cytoplasmic segment spans residues 337–347 (TSQFEVRFSAT). Residues 348–368 (IYLVCFCFFKQLAMIFMSVLA) traverse the membrane as a helical segment. The Periplasmic segment spans residues 369 to 378 (GKMYESIGFQ). The chain crosses the membrane as a helical span at residues 379-399 (GAYLVLGIIRVSFTLISVFTL). Residues 400-416 (SGPGPFSLLRRRESVAL) are Cytoplasmic-facing.

Belongs to the major facilitator superfamily. Oligosaccharide:H(+) symporter (OHS) (TC 2.A.1.5) family.

It localises to the cell inner membrane. The enzyme catalyses lactose(in) + H(+)(in) = lactose(out) + H(+)(out). Responsible for transport of beta-galactosides into the cell, with the concomitant import of a proton (symport system). The chain is Lactose permease (lacY) from Citrobacter freundii.